We begin with the raw amino-acid sequence, 176 residues long: NAD(P)H-quinone oxidoreductase subunit J (176 aa).

The protein belongs to the complex I 30 kDa subunit family. NDH-1 can be composed of about 15 different subunits; different subcomplexes with different compositions have been identified which probably have different functions.

It is found in the cellular thylakoid membrane. It catalyses the reaction a plastoquinone + NADH + (n+1) H(+)(in) = a plastoquinol + NAD(+) + n H(+)(out). It carries out the reaction a plastoquinone + NADPH + (n+1) H(+)(in) = a plastoquinol + NADP(+) + n H(+)(out). In terms of biological role, NDH-1 shuttles electrons from an unknown electron donor, via FMN and iron-sulfur (Fe-S) centers, to quinones in the respiratory and/or the photosynthetic chain. The immediate electron acceptor for the enzyme in this species is believed to be plastoquinone. Couples the redox reaction to proton translocation, and thus conserves the redox energy in a proton gradient. Cyanobacterial NDH-1 also plays a role in inorganic carbon-concentration. The protein is NAD(P)H-quinone oxidoreductase subunit J of Nostoc punctiforme (strain ATCC 29133 / PCC 73102).